Reading from the N-terminus, the 86-residue chain is Exodeoxyribonuclease 7 small subunit (86 aa).

The tract at residues 1–26 (MQDELFETEKAPQKNAKNAKNAPKKS) is disordered.

Belongs to the XseB family. Heterooligomer composed of large and small subunits.

It is found in the cytoplasm. It catalyses the reaction Exonucleolytic cleavage in either 5'- to 3'- or 3'- to 5'-direction to yield nucleoside 5'-phosphates.. Its function is as follows. Bidirectionally degrades single-stranded DNA into large acid-insoluble oligonucleotides, which are then degraded further into small acid-soluble oligonucleotides. The sequence is that of Exodeoxyribonuclease 7 small subunit from Helicobacter pylori (strain J99 / ATCC 700824) (Campylobacter pylori J99).